A 361-amino-acid polypeptide reads, in one-letter code: Phenylalanine 4-monooxygenase, chloroplastic (361 aa).

The N-terminal 55 residues, 1–55 (MLALRQGALLLSARGGQTTHDNLQLCAGPSRRPRARWISSAPRPSTLVERHIRPQ), are a transit peptide targeting the chloroplast. The segment at 47–67 (LVERHIRPQASTASDATTSTS) is disordered. Residues 56 to 67 (ASTASDATTSTS) are compositionally biased toward low complexity. Positions 227, 232, and 272 each coordinate Fe cation.

Belongs to the biopterin-dependent aromatic amino acid hydroxylase family. Fe(2+) serves as cofactor.

The protein resides in the plastid. Its subcellular location is the chloroplast. The enzyme catalyses (6R)-L-erythro-5,6,7,8-tetrahydrobiopterin + L-phenylalanine + O2 = (4aS,6R)-4a-hydroxy-L-erythro-5,6,7,8-tetrahydrobiopterin + L-tyrosine. Functionally, catalyzes the hydroxylation of L-phenylalanine to L-tyrosine. Can functionally complement an Escherichia coli tyrosine auxotroph. This is Phenylalanine 4-monooxygenase, chloroplastic from Chlamydomonas reinhardtii (Chlamydomonas smithii).